A 219-amino-acid chain; its full sequence is Ras-like protein 1 (219 aa).

15–22 (GDGGVGKS) contributes to the GTP binding site. The Effector region signature appears at 37–45 (YDPTIEDSY). GTP contacts are provided by residues 62-66 (DTAGQ) and 121-124 (NKCD). Cysteine methyl ester is present on Cys-216. The S-farnesyl cysteine moiety is linked to residue Cys-216. The propeptide at 217–219 (VIC) is removed in mature form.

Belongs to the small GTPase superfamily. Ras family. Scd1, scd2, cdc42, and ras1, in its GTP-bound state, act cooperatively to form a protein complex. Post-translationally, palmitoylated by the erf2-erf4 complex.

It is found in the cell membrane. It catalyses the reaction GTP + H2O = GDP + phosphate + H(+). With respect to regulation, alternates between an inactive form bound to GDP and an active form bound to GTP. Activated by a guanine nucleotide-exchange factor (GEF) and inactivated by a GTPase-activating protein (GAP). In terms of biological role, participates in the process of sexual differentiation and the determination of cell shape. Essential for mating and for recognition of the mating pheromone, but not for vegetative growth. Does not regulate the intracellular cAMP level. Regulates two downstream pathways, namely the byr2/byr1/spk1 mitogen-activated protein kinase cascade and the cdc42 small G protein pathway. The former is relevant to mating and sporulation, whereas the latter is relevant to mating, cell growth and cell morphology. This Schizosaccharomyces pombe (strain 972 / ATCC 24843) (Fission yeast) protein is Ras-like protein 1 (ras1).